The primary structure comprises 482 residues: ATP synthase subunit beta (482 aa).

162-169 (GGAGVGKT) contacts ATP.

In terms of assembly, F-type ATPases have 2 components, CF(1) - the catalytic core - and CF(0) - the membrane proton channel. CF(1) has five subunits: alpha(3), beta(3), gamma(1), delta(1), epsilon(1). CF(0) has four main subunits: a(1), b(1), b'(1) and c(9-12).

The protein localises to the cellular thylakoid membrane. The enzyme catalyses ATP + H2O + 4 H(+)(in) = ADP + phosphate + 5 H(+)(out). Inhibited by dicyclohexylcarbodiimide. Produces ATP from ADP in the presence of a proton gradient across the membrane. The catalytic sites are hosted primarily by the beta subunits. Its function is as follows. The complex from the organism is particularly stable to disruption and remains functional after 6 hrs at 55 degrees Celsius. This is ATP synthase subunit beta from Thermosynechococcus vestitus (strain NIES-2133 / IAM M-273 / BP-1).